We begin with the raw amino-acid sequence, 506 residues long: Glutamate--tRNA ligase (506 aa).

The 'HIGH' region motif lies at 24 to 34 (PSPTGLQHIGG). Residues Cys121, Cys123, Cys148, and His150 each contribute to the Zn(2+) site. The short motif at 266-270 (KLSKR) is the 'KMSKS' region element. Lys269 serves as a coordination point for ATP.

This sequence belongs to the class-I aminoacyl-tRNA synthetase family. Glutamate--tRNA ligase type 1 subfamily. In terms of assembly, monomer. It depends on Zn(2+) as a cofactor.

Its subcellular location is the cytoplasm. It catalyses the reaction tRNA(Glu) + L-glutamate + ATP = L-glutamyl-tRNA(Glu) + AMP + diphosphate. Functionally, catalyzes the attachment of glutamate to tRNA(Glu) in a two-step reaction: glutamate is first activated by ATP to form Glu-AMP and then transferred to the acceptor end of tRNA(Glu). In Borrelia recurrentis (strain A1), this protein is Glutamate--tRNA ligase.